A 493-amino-acid chain; its full sequence is F(420)H(2) dehydrogenase subunit N (493 aa).

14 helical membrane-spanning segments follow: residues 7–27 (LAPE…GVFL), 34–54 (ILGY…VKSF), 78–98 (LSQF…IASI), 107–127 (TEEF…VASA), 130–150 (LILL…LAGF), 165–185 (FVIG…VYGA), 205–225 (PIGI…MALV), 244–264 (ALLA…VFII), 273–293 (WQFM…VVAV), 310–330 (AGYI…GGIM), 333–353 (LAHA…VWMI), 381–401 (ALCM…AGFM), 404–424 (FVLF…IAIL), and 454–474 (IPFP…VMGL).

It belongs to the complex I subunit 2 family. As to quaternary structure, the FPO complex is composed of at least 13 different subunits. FpoA, FpoH, FpoJ, FpoK, FpoL, FpoM and FpoN proteins constitute the membrane sector of the complex.

Its subcellular location is the cell membrane. It catalyses the reaction methanophenazine + reduced coenzyme F420-(gamma-L-Glu)(n) = dihydromethanophenazine + oxidized coenzyme F420-(gamma-L-Glu)(n) + H(+). Component of the F(420)H(2) dehydrogenase (FPO complex) which is part of the energy-conserving F(420)H(2):heterodisulfide oxidoreductase system. The membrane-bound electron transfer system of the complex plays an important role in the metabolism of methylotrophic methanogens when the organisms grow on methanol or methylamines. Catalyzes the oxidation of methanophenazine to dihydromethanophenazine. It shuttles electrons from F(420)H(2), via FAD and iron-sulfur (Fe-S) centers, to methanophenazine (an electron carrier in the membrane). It couples the redox reaction to proton translocation (for every two electrons transferred, two hydrogen ions are translocated across the cytoplasmic membrane), and thus conserves the redox energy in a proton gradient. It also catalyzes the oxidation of F(420)H(2) with quinones such as 2,3-dimethyl-1,4-naphthoquinone, 2-methyl-1,4-naphthoquinone and tetramethyl-p-benzoquinone. The polypeptide is F(420)H(2) dehydrogenase subunit N (fpoN) (Methanosarcina mazei (strain ATCC BAA-159 / DSM 3647 / Goe1 / Go1 / JCM 11833 / OCM 88) (Methanosarcina frisia)).